A 300-amino-acid polypeptide reads, in one-letter code: MDFLMSGLAACGACVFTNPLEVVKTRMQLQGELQAPGTYQRHYRNVFHAFITIGKVDGLAALQKGLAPALLYQFLMNGIRLGTYGLAEAGGYLHTAEGTHSPARSAAAGAMAGVMGAYLGSPIYMVKTHLQAQAASEIAVGHQYKHQGMFQALTEIGQKHGLVGLWRGALGGLPRVIVGSSTQLCTFSSTKDLLSQWEIFPPQSWKLALVAAMMSGIAVVLAMAPFDVACTRLYNQPTDAQGKGLMYRGILDALLQTARTEGIFGMYKGIGASYFRLGPHTILSLFFWDQLRSLYYTDTK.

Solcar repeat units follow at residues 1 to 90 (MDFL…AEAG), 100 to 193 (HSPA…TKDL), and 203 to 294 (QSWK…LRSL). Transmembrane regions (helical) follow at residues 38–58 (TYQR…KVDG), 59–79 (LAAL…MNGI), 91–119 (GYLH…GAYL), 169–190 (ALGG…FSST), 205–225 (WKLA…AMAP), and 277–300 (LGPH…TDTK).

Belongs to the mitochondrial carrier (TC 2.A.29) family.

The protein resides in the mitochondrion inner membrane. It carries out the reaction a dicarboxylate(in) + sulfate(out) = a dicarboxylate(out) + sulfate(in). Its function is as follows. Putative antiporter that exchanges dicarboxylates and sulfur oxoanions across the inner membrane of mitochondria. The polypeptide is Solute carrier family 25 member 35 (SLC25A35) (Homo sapiens (Human)).